We begin with the raw amino-acid sequence, 329 residues long: Ethylene-responsive transcription factor ERF117 (329 aa).

Disordered stretches follow at residues 25 to 51 (DATDSSSDDESISGNNPRRQIKPKPPK) and 71 to 90 (NSTGNKAAGNRKTSSGFKGV). Polar residues predominate over residues 71-86 (NSTGNKAAGNRKTSSG). Residues 86-143 (GFKGVRRRPWGKFAAEIRNPFEKKRKWLGTFPTEEEAAEAYQKSKREFDERLGLVKQE) constitute a DNA-binding region (AP2/ERF).

Belongs to the AP2/ERF transcription factor family. ERF subfamily.

Its subcellular location is the nucleus. Probably acts as a transcriptional activator. Binds to the GCC-box pathogenesis-related promoter element. May be involved in the regulation of gene expression by stress factors and by components of stress signal transduction pathways. This is Ethylene-responsive transcription factor ERF117 (ERF117) from Arabidopsis thaliana (Mouse-ear cress).